We begin with the raw amino-acid sequence, 683 residues long: Acetyl-coenzyme A synthetase 2 (683 aa).

Residues 206–209 (RGGK) and threonine 325 contribute to the CoA site. Residues 401-403 (GEP) and 425-430 (DTMWQT) contribute to the ATP site. 425 to 430 (DTMWQT) serves as a coordination point for AMP. Lysine 506 is covalently cross-linked (Glycyl lysine isopeptide (Lys-Gly) (interchain with G-Cter in ubiquitin)). ATP is bound by residues aspartate 516 and arginine 531. Aspartate 516 and arginine 531 together coordinate AMP. Serine 539 serves as a coordination point for CoA. Residue arginine 542 coordinates ATP. Arginine 612 contacts CoA. Position 679 is a phosphoserine (serine 679).

It belongs to the ATP-dependent AMP-binding enzyme family.

It is found in the cytoplasm. It localises to the nucleus. The catalysed reaction is acetate + ATP + CoA = acetyl-CoA + AMP + diphosphate. Its pathway is carbohydrate metabolism; pyruvate metabolism. Functionally, catalyzes the production of acetyl-CoA. Provides the acetyl-CoA source for histone acetylation in the nucleus. 'Anaerobic' isozyme of acetyl-coenzyme A synthetase, which is required for growth on fermentable carbon sources such as glucose. May be involved in the PDH (pyruvate dehydrogenase complex) bypass. The protein is Acetyl-coenzyme A synthetase 2 of Saccharomyces cerevisiae (strain ATCC 204508 / S288c) (Baker's yeast).